We begin with the raw amino-acid sequence, 58 residues long: Curromycin resistance protein (58 aa).

The interval 1 to 37 is disordered; the sequence is MSVVALGATSITPPHGPESQGRPFPARGPVRPSARAR. Low complexity predominate over residues 25–37; it reads PARGPVRPSARAR.

This chain is Curromycin resistance protein (cre), found in Streptomyces hygroscopicus.